The following is a 329-amino-acid chain: MNKSLETLAGRIIAGEQLSVEESIALSASSGTDAFALFLAASRVKEHFLGNGVDLCSIINAKSGRCPENCAFCAQSAHHTTNAPIYPLVDEDKLVACAKEAEAAGSRCYGIITSGTTIKKGEELDRICRAVRRIRETTSIAPSCSLGIIDHETAVTLREAGVETYHHNLETSRSFFPHICTTHDYEEDVETVRVAKQAGLTICCGGIFGLGETAAQRVELAMTLRELDVDSVPLNFLNPIEGTRLAGSKLISPLECLKTIALFRLILPTKKIAVCGGREQNLRDLQSWIFFAGASGTMIGNYLTTTGRPAEQDWQMLRDLELAVGGCCE.

The Radical SAM core domain maps to 48–278 (FLGNGVDLCS…TKKIAVCGGR (231 aa)). 3 residues coordinate [4Fe-4S] cluster: Cys66, Cys70, and Cys73. Residues Ser143 and Cys203 each contribute to the [2Fe-2S] cluster site.

The protein belongs to the radical SAM superfamily. Biotin synthase family. In terms of assembly, homodimer. [4Fe-4S] cluster is required as a cofactor. [2Fe-2S] cluster serves as cofactor.

It carries out the reaction (4R,5S)-dethiobiotin + (sulfur carrier)-SH + 2 reduced [2Fe-2S]-[ferredoxin] + 2 S-adenosyl-L-methionine = (sulfur carrier)-H + biotin + 2 5'-deoxyadenosine + 2 L-methionine + 2 oxidized [2Fe-2S]-[ferredoxin]. The protein operates within cofactor biosynthesis; biotin biosynthesis; biotin from 7,8-diaminononanoate: step 2/2. Functionally, catalyzes the conversion of dethiobiotin (DTB) to biotin by the insertion of a sulfur atom into dethiobiotin via a radical-based mechanism. The chain is Biotin synthase from Geobacter metallireducens (strain ATCC 53774 / DSM 7210 / GS-15).